Reading from the N-terminus, the 367-residue chain is PR domain zinc finger protein 12 (367 aa).

The 118-residue stretch at 86–203 folds into the SET domain; the sequence is AEVIIAQSSI…PDQELLVWYG (118 aa). 3 consecutive C2H2-type zinc fingers follow at residues 243–265, 271–293, and 299–323; these read MRCVICHRGFNSRSNLRSHMRIH, FVCRFCNRRFSQSSTLRNHVRLH, and YKCQVCQSAYSQLAGLRAHQKSARH. Positions 318-337 are disordered; the sequence is QKSARHRPPSTALQAHSPAL.

The protein belongs to the class V-like SAM-binding methyltransferase superfamily. As to quaternary structure, interacts with EHMT2. Not found in adult tissues except in dorsal root ganglia.

It is found in the nucleus. Transcriptional regulator necessary for the development of nociceptive neurons, playing a key role in determining the nociceptive lineage from neural crest cell progenitors. Initiates neurogenesis and activates downstream pro-neuronal transcription factors, such as NEUROD1, BRN3A, and ISL1, specifically within nociceptive neurons, while repressing non-nociceptor cell fates. Essential for the proper function of nociceptors in adults, influencing both their excitability and their gene expression, thereby impacting how these neurons respond to various pain stimuli. This is PR domain zinc finger protein 12 (PRDM12) from Homo sapiens (Human).